A 388-amino-acid polypeptide reads, in one-letter code: MQHANTNKSLMTPGNIITGIILVMGLVLTVLRFTKGIGAVSNLDDNNPWGIWIGFDLLCGVALAAGGYVTSASCYLFGMKRYHSAVRPAITTAFLGYFFVVVALNYDLGHPLRLPYPLVYSQGTTSLLFEVGLCVATYLTVLFVEWSPAALEWLGLRKIRNVVVKLTLVLTIFGVVLSTLHQSSLGALFLIAPSKLHPLWYSSFLPVFFFISSMVAGLSMVIFEGSLAHKGMHHMMDETHLKEADGVVFGFGKAASFVLAGYFMIKVIDVTMDNDWHYLATGYGAWWLVEMLGFVALPSFLYALGVREKRIGVIRFASVLGVLGIVMNRFNVCLVAFNWQLPADQRYFPHWMEIGISVFIVTSIITVYRFIASRMPVLYEHPDYKDAH.

The next 10 helical transmembrane spans lie at 10 to 31 (LMTP…LTVL), 57 to 78 (LLCG…YLFG), 89 to 106 (AITT…ALNY), 130 to 144 (EVGL…VLFV), 166 to 191 (LTLV…LFLI), 199 to 222 (LWYS…SMVI), 254 to 265 (AASFVLAGYFMI), 291 to 306 (MLGF…ALGV), 316 to 328 (FASV…IVMN), and 354 to 368 (IGIS…ITVY).

Belongs to the NrfD family.

Its subcellular location is the cell membrane. Functionally, HMWC (high-molecular-weight cytochrome c), ORF2, ORF3, ORF4, ORF5 and ORF6 in the HMC operon form a transmembrane protein complex that allows electron flow from the periplasmic hydrogenase to the cytoplasmic enzymes that catalyze reduction of sulfates. This chain is Protein DVU_0534, found in Nitratidesulfovibrio vulgaris (strain ATCC 29579 / DSM 644 / CCUG 34227 / NCIMB 8303 / VKM B-1760 / Hildenborough) (Desulfovibrio vulgaris).